Here is a 425-residue protein sequence, read N- to C-terminus: UPF0597 protein VP2173 (425 aa).

It belongs to the UPF0597 family.

In Vibrio parahaemolyticus serotype O3:K6 (strain RIMD 2210633), this protein is UPF0597 protein VP2173.